The primary structure comprises 372 residues: Histidinol-phosphate aminotransferase (372 aa).

Residue Lys-234 is modified to N6-(pyridoxal phosphate)lysine.

This sequence belongs to the class-II pyridoxal-phosphate-dependent aminotransferase family. Histidinol-phosphate aminotransferase subfamily. Homodimer. Requires pyridoxal 5'-phosphate as cofactor.

The catalysed reaction is L-histidinol phosphate + 2-oxoglutarate = 3-(imidazol-4-yl)-2-oxopropyl phosphate + L-glutamate. It participates in amino-acid biosynthesis; L-histidine biosynthesis; L-histidine from 5-phospho-alpha-D-ribose 1-diphosphate: step 7/9. The protein is Histidinol-phosphate aminotransferase (hisC) of Corynebacterium efficiens (strain DSM 44549 / YS-314 / AJ 12310 / JCM 11189 / NBRC 100395).